Consider the following 285-residue polypeptide: Bifunctional protein FolD (285 aa).

NADP(+)-binding positions include 165-167 (GRS) and Ser190.

The protein belongs to the tetrahydrofolate dehydrogenase/cyclohydrolase family. Homodimer.

The catalysed reaction is (6R)-5,10-methylene-5,6,7,8-tetrahydrofolate + NADP(+) = (6R)-5,10-methenyltetrahydrofolate + NADPH. It carries out the reaction (6R)-5,10-methenyltetrahydrofolate + H2O = (6R)-10-formyltetrahydrofolate + H(+). The protein operates within one-carbon metabolism; tetrahydrofolate interconversion. Catalyzes the oxidation of 5,10-methylenetetrahydrofolate to 5,10-methenyltetrahydrofolate and then the hydrolysis of 5,10-methenyltetrahydrofolate to 10-formyltetrahydrofolate. The protein is Bifunctional protein FolD of Burkholderia pseudomallei (strain 1106a).